A 378-amino-acid chain; its full sequence is GDP-mannose-dependent alpha-mannosyltransferase (378 aa).

The protein belongs to the glycosyltransferase group 1 family. Glycosyltransferase 4 subfamily.

Its pathway is phospholipid metabolism; phosphatidylinositol metabolism. Its function is as follows. Catalyzes the addition of a mannose residue from GDP-D-mannose to GlcAGroAc2 to generate 1,2-di-O-C16/C18:1-(alpha-D-mannopyranosyl)-(1-4)-(alpha-D-glucopyranosyluronic acid)-(1-3)-glycerol(ManGlcAGroAc2). In Mycobacterium tuberculosis (strain CDC 1551 / Oshkosh), this protein is GDP-mannose-dependent alpha-mannosyltransferase (mgtA).